A 303-amino-acid chain; its full sequence is S-methyl-5'-thioadenosine phosphorylase 1 (303 aa).

Phosphate is bound by residues Ser14, 57 to 58 (RH), and 90 to 91 (SA). Met198 contacts substrate. Ser199 lines the phosphate pocket. 222-224 (DYD) lines the substrate pocket.

Belongs to the PNP/MTAP phosphorylase family. MTAP subfamily. In terms of assembly, homotrimer.

The protein resides in the cytoplasm. The protein localises to the nucleus. The catalysed reaction is S-methyl-5'-thioadenosine + phosphate = 5-(methylsulfanyl)-alpha-D-ribose 1-phosphate + adenine. It participates in amino-acid biosynthesis; L-methionine biosynthesis via salvage pathway; S-methyl-5-thio-alpha-D-ribose 1-phosphate from S-methyl-5'-thioadenosine (phosphorylase route): step 1/1. Functionally, catalyzes the reversible phosphorylation of S-methyl-5'-thioadenosine (MTA) to adenine and 5-methylthioribose-1-phosphate. Involved in the breakdown of MTA, a major by-product of polyamine biosynthesis. Responsible for the first step in the methionine salvage pathway after MTA has been generated from S-adenosylmethionine. Has broad substrate specificity with 6-aminopurine nucleosides as preferred substrates. This chain is S-methyl-5'-thioadenosine phosphorylase 1, found in Puccinia graminis f. sp. tritici (strain CRL 75-36-700-3 / race SCCL) (Black stem rust fungus).